We begin with the raw amino-acid sequence, 1876 residues long: 1,3-beta-glucan synthase component FKS1 (1876 aa).

2 stretches are compositionally biased toward polar residues: residues 1–25 (MNTDQQPYQGQTDYTQGPGNGQSQE) and 60–71 (QPPNESYDQDYT). The disordered stretch occupies residues 1–108 (MNTDQQPYQG…PGTPGYDSYG (108 aa)). The Cytoplasmic segment spans residues 1 to 454 (MNTDQQPYQG…WLHLVTNFNR (454 aa)). A Glycyl lysine isopeptide (Lys-Gly) (interchain with G-Cter in ubiquitin) cross-link involves residue Lys-259. 2 positions are modified to phosphothreonine: Thr-269 and Thr-272. Residues Lys-275 and Lys-386 each participate in a glycyl lysine isopeptide (Lys-Gly) (interchain with G-Cter in ubiquitin) cross-link. Residues 455–475 (IWVMHISIFWMYFAYNSPTFY) traverse the membrane as a helical segment. Residues 476-492 (THNYQQLVDNQPLAAYK) lie on the Extracellular side of the membrane. The helical transmembrane segment at 493 to 513 (WASCALGGTVASLIQIVATLC) threads the bilayer. Residues 514–531 (EWSFVPRKWAGAQHLSRR) lie on the Cytoplasmic side of the membrane. The helical transmembrane segment at 532–552 (FWFLCIIFGINLGPIIFVFAY) threads the bilayer. Residues 553 to 563 (DKDTVYSTAAH) are Extracellular-facing. Residues 564–584 (VVAAVMFFVAVATIIFFSIMP) form a helical membrane-spanning segment. Topologically, residues 585 to 621 (LGGLFTSYMKKSTRRYVASQTFTAAFAPLHGLDRWMS) are cytoplasmic. Residues 622–642 (YLVWVTVFAAKYSESYYFLVL) traverse the membrane as a helical segment. Residues 643-678 (SLRDPIRILSTTAMRCTGEYWWGAVLCKVQPKIVLG) are Extracellular-facing. The helical transmembrane segment at 679–699 (LVIATDFILFFLDTYLWYIIV) threads the bilayer. The Cytoplasmic segment spans residues 700–1358 (NTIFSVGKSF…QPAVDWVRRY (659 aa)). Glycyl lysine isopeptide (Lys-Gly) (interchain with G-Cter in ubiquitin) cross-links involve residues Lys-910 and Lys-915. A helical membrane pass occupies residues 1359–1379 (TLSIFIVFWIAFVPIVVQELI). Residues 1380–1444 (ERGLWKATQR…RIPFSILYSR (65 aa)) are Extracellular-facing. Residues 1445–1465 (FAGSAIYMGARSMLMLLFGTV) traverse the membrane as a helical segment. At 1466 to 1469 (AHWQ) the chain is on the cytoplasmic side. The helical transmembrane segment at 1470–1490 (APLLWFWASLSSLIFAPFVFN) threads the bilayer. Topologically, residues 1491 to 1560 (PHQFAWEDFF…DASRAHRTNL (70 aa)) are extracellular. Glycyl lysine isopeptide (Lys-Gly) (interchain with G-Cter in ubiquitin) cross-links involve residues Lys-1539 and Lys-1547. The chain crosses the membrane as a helical span at residues 1561–1581 (IMAEIIPCAIYAAGCFIAFTF). At 1582–1601 (INAQTGVKTTDDDRVNSVLR) the chain is on the cytoplasmic side. Residues 1602–1622 (IIICTLAPIAVNLGVLFFCMG) form a helical membrane-spanning segment. Residues 1623–1643 (MSCCSGPLFGMCCKKTGSVMA) are Extracellular-facing. Residues 1644–1664 (GIAHGVAVIVHIAFFIVMWVL) form a helical membrane-spanning segment. Residues 1665 to 1672 (ESFNFVRM) lie on the Cytoplasmic side of the membrane. The helical transmembrane segment at 1673-1695 (LIGVVTCIQCQRLIFHCMTALML) threads the bilayer. At 1696–1802 (TREFKNDHAN…RKRMVKKYCS (107 aa)) the chain is on the extracellular side. A helical membrane pass occupies residues 1803-1823 (LYFLVLAIFAGCIIGPAVASA). At 1824–1876 (KIHKHIGDSLDGVVHNLFQPINTTNNDTGSQMSTYQSHYYTHTPSLKTWSTIK) the chain is on the cytoplasmic side.

Belongs to the glycosyltransferase 48 family. As to quaternary structure, component of the 1,3-beta-glucan synthase (GS) complex, composed of two alternate catalytic subunits FKS1 or GSC2, and a regulatory subunit RHO1. Interacts with RHO1, which is a GTP-binding protein.

Its subcellular location is the mitochondrion. The protein localises to the cell membrane. It carries out the reaction [(1-&gt;3)-beta-D-glucosyl](n) + UDP-alpha-D-glucose = [(1-&gt;3)-beta-D-glucosyl](n+1) + UDP + H(+). Its function is as follows. Alternate catalytic subunit of the 1,3-beta-glucan synthase (GS) complex. Synthesizes 1,3-beta-glucan, a major structural component of the yeast cell wall. Involved in cell wall synthesis, maintenance and remodeling. This chain is 1,3-beta-glucan synthase component FKS1 (FKS1), found in Saccharomyces cerevisiae (strain ATCC 204508 / S288c) (Baker's yeast).